A 483-amino-acid polypeptide reads, in one-letter code: Glutamyl-tRNA(Gln) amidotransferase subunit A (483 aa).

Catalysis depends on charge relay system residues K77 and S152. The active-site Acyl-ester intermediate is the S176.

Belongs to the amidase family. GatA subfamily. As to quaternary structure, heterotrimer of A, B and C subunits.

The enzyme catalyses L-glutamyl-tRNA(Gln) + L-glutamine + ATP + H2O = L-glutaminyl-tRNA(Gln) + L-glutamate + ADP + phosphate + H(+). Functionally, allows the formation of correctly charged Gln-tRNA(Gln) through the transamidation of misacylated Glu-tRNA(Gln) in organisms which lack glutaminyl-tRNA synthetase. The reaction takes place in the presence of glutamine and ATP through an activated gamma-phospho-Glu-tRNA(Gln). The sequence is that of Glutamyl-tRNA(Gln) amidotransferase subunit A from Listeria monocytogenes serotype 4b (strain F2365).